Here is a 203-residue protein sequence, read N- to C-terminus: Sperm-specific protein PHI-2B/PHI-3 (203 aa).

Residues 1–35 (MPSPSRKSRSRSRSRSKSPKRSPAKKARKTPKKPR) show a composition bias toward basic residues. 2 disordered regions span residues 1-46 (MPSP…PSTL) and 104-203 (KTSA…KSKK). Residues 41–120 (KKPSTLSMIV…GATGSFRVGK (80 aa)) enclose the H15 domain. Composition is skewed to basic residues over residues 126-140 (KKAK…KSSK) and 147-203 (KAKK…KSKK).

Post-translationally, PL-II* and PL-IV are produced by post-translational cleavage of a common precursor. Sperm.

The protein localises to the nucleus. It localises to the chromosome. Functionally, linker histones are implicated in chromatin remodeling and/or transcriptional regulation during spermiogenesis, the process of spermatid maturation into spermatozoa. Protamines substitute for histones in the chromatin of sperm during the haploid phase of spermatogenesis. They compact sperm DNA into a highly condensed, stable and inactive complex. The protein is Sperm-specific protein PHI-2B/PHI-3 of Mytilus trossulus (Blue mussel).